The sequence spans 238 residues: 2-C-methyl-D-erythritol 4-phosphate cytidylyltransferase (238 aa).

This sequence belongs to the IspD/TarI cytidylyltransferase family. IspD subfamily.

The enzyme catalyses 2-C-methyl-D-erythritol 4-phosphate + CTP + H(+) = 4-CDP-2-C-methyl-D-erythritol + diphosphate. It participates in isoprenoid biosynthesis; isopentenyl diphosphate biosynthesis via DXP pathway; isopentenyl diphosphate from 1-deoxy-D-xylulose 5-phosphate: step 2/6. In terms of biological role, catalyzes the formation of 4-diphosphocytidyl-2-C-methyl-D-erythritol from CTP and 2-C-methyl-D-erythritol 4-phosphate (MEP). The chain is 2-C-methyl-D-erythritol 4-phosphate cytidylyltransferase from Aliivibrio fischeri (strain ATCC 700601 / ES114) (Vibrio fischeri).